Reading from the N-terminus, the 398-residue chain is Dual-specificity RNA methyltransferase RlmN (398 aa).

E119 acts as the Proton acceptor in catalysis. Residues 125-364 (EADRATLCVS…TIVRKTRGDD (240 aa)) form the Radical SAM core domain. C132 and C369 are joined by a disulfide. Positions 139, 143, and 146 each coordinate [4Fe-4S] cluster. S-adenosyl-L-methionine-binding positions include 193-194 (GE), S225, 247-249 (SLH), and N326. C369 acts as the S-methylcysteine intermediate in catalysis.

It belongs to the radical SAM superfamily. RlmN family. [4Fe-4S] cluster is required as a cofactor.

It is found in the cytoplasm. The catalysed reaction is adenosine(2503) in 23S rRNA + 2 reduced [2Fe-2S]-[ferredoxin] + 2 S-adenosyl-L-methionine = 2-methyladenosine(2503) in 23S rRNA + 5'-deoxyadenosine + L-methionine + 2 oxidized [2Fe-2S]-[ferredoxin] + S-adenosyl-L-homocysteine. It catalyses the reaction adenosine(37) in tRNA + 2 reduced [2Fe-2S]-[ferredoxin] + 2 S-adenosyl-L-methionine = 2-methyladenosine(37) in tRNA + 5'-deoxyadenosine + L-methionine + 2 oxidized [2Fe-2S]-[ferredoxin] + S-adenosyl-L-homocysteine. In terms of biological role, specifically methylates position 2 of adenine 2503 in 23S rRNA and position 2 of adenine 37 in tRNAs. m2A2503 modification seems to play a crucial role in the proofreading step occurring at the peptidyl transferase center and thus would serve to optimize ribosomal fidelity. This is Dual-specificity RNA methyltransferase RlmN from Yersinia pestis.